The following is a 388-amino-acid chain: Galactokinase (388 aa).

Substrate is bound at residue 33-36; that stretch reads EHTD. Residues serine 67 and 124 to 130 each bind ATP; that span reads GAGLSSS. Mg(2+) is bound by residues serine 130 and glutamate 162. Residue aspartate 174 is the Proton acceptor of the active site. Tyrosine 224 contributes to the substrate binding site.

Belongs to the GHMP kinase family. GalK subfamily.

Its subcellular location is the cytoplasm. The catalysed reaction is alpha-D-galactose + ATP = alpha-D-galactose 1-phosphate + ADP + H(+). The protein operates within carbohydrate metabolism; galactose metabolism. In terms of biological role, catalyzes the transfer of the gamma-phosphate of ATP to D-galactose to form alpha-D-galactose-1-phosphate (Gal-1-P). The sequence is that of Galactokinase from Lacticaseibacillus casei (strain BL23) (Lactobacillus casei).